Reading from the N-terminus, the 888-residue chain is Glutamate receptor 3 (888 aa).

Positions 1 to 22 are cleaved as a signal peptide; sequence MGQSVLRAVFFLVLGLLGHSHG. Topologically, residues 23–546 are extracellular; the sequence is GFPNTISIGG…GVFSFLDPLA (524 aa). N-linked (GlcNAc...) asparagine glycosylation is found at asparagine 57, asparagine 260, asparagine 374, asparagine 409, and asparagine 416. Cysteine 85 and cysteine 334 are joined by a disulfide. L-glutamate contacts are provided by proline 502, threonine 504, and arginine 509. A helical transmembrane segment spans residues 547–567; that stretch reads YEIWMCIVFAYIGVSVVLFLV. Topologically, residues 568–596 are cytoplasmic; sequence SRFSPYEWHLEDNNEEPRDPQSPPDPPNE. Residues 597-612 constitute an intramembrane region (helical; Pore-forming); the sequence is FGIFNSLWFSLGAFMQ. An intramembrane segment occupies 613–615; it reads QGC. A lipid anchor (S-palmitoyl cysteine) is attached at cysteine 615. The Cytoplasmic portion of the chain corresponds to 616 to 621; that stretch reads DISPRS. Residues 622-642 form a helical membrane-spanning segment; that stretch reads LSGRIVGGVWWFFTLIIISSY. Topologically, residues 643–817 are extracellular; it reads TANLAAFLTV…DKTSALSLSN (175 aa). L-glutamate is bound by residues serine 680, threonine 681, and glutamate 731. Cysteine 744 and cysteine 799 are disulfide-bonded. Residues 818–838 traverse the membrane as a helical segment; sequence VAGVFYILVGGLGLAMMVALI. Topologically, residues 839–888 are cytoplasmic; that stretch reads EFCYKSRAESKRMKLTKNTQNFKPAPATNTQNYATYREGYNVYGTESVKI. Residue cysteine 841 is the site of S-palmitoyl cysteine attachment. A phosphotyrosine mark is found at tyrosine 871 and tyrosine 881.

It belongs to the glutamate-gated ion channel (TC 1.A.10.1) family. GRIA3 subfamily. In terms of assembly, homotetramer or heterotetramer of pore-forming glutamate receptor subunits. Tetramers may be formed by the dimerization of dimers. Interacts with PICK1, GRIP1 and GRIP2. Found in a complex with GRIA1, GRIA2, GRIA4, CNIH2, CNIH3, CACNG2, CACNG3, CACNG4, CACNG5, CACNG7 and CACNG8. Interacts with CACNG5. Found in a complex with GRIA1, GRIA2, GRIA4, DLG4, CACNG8 and CNIH2.

The protein localises to the cell membrane. The protein resides in the postsynaptic cell membrane. Its subcellular location is the postsynaptic density membrane. The enzyme catalyses Ca(2+)(in) = Ca(2+)(out). Functionally, ionotropic glutamate receptor that functions as a ligand-gated cation channel, gated by L-glutamate and glutamatergic agonists such as alpha-amino-3-hydroxy-5-methyl-4-isoxazolepropionic acid (AMPA), quisqualic acid, and kainic acid. L-glutamate acts as an excitatory neurotransmitter at many synapses in the central nervous system and plays an important role in fast excitatory synaptic transmission by inducing long-term potentiation. Binding of the excitatory neurotransmitter L-glutamate induces a conformation change, leading to the opening of the cation channel, and thereby converts the chemical signal to an electrical impulse upon entry of calcium. The receptor then desensitizes rapidly and enters a transient inactive state, characterized by the presence of bound agonist. In the presence of CACNG8, shows resensitization which is characterized by a delayed accumulation of current flux upon continued application of glutamate. The protein is Glutamate receptor 3 of Rattus norvegicus (Rat).